A 935-amino-acid polypeptide reads, in one-letter code: Auxin response factor 6 (935 aa).

Positions 129–231 (FCKTLTASDT…QLLLGIRRAN (103 aa)) form a DNA-binding region, TF-B3. Disordered stretches follow at residues 536–624 (QAYL…PLHT) and 645–714 (SAMT…SASD). Low complexity-rich tracts occupy residues 546-565 (QPQS…QQQQ) and 573-582 (SASSAAVVSA). 2 stretches are compositionally biased toward polar residues: residues 583-624 (MSQF…PLHT) and 661-689 (SSFQ…SNVP). The PB1 domain maps to 796-880 (NTFVKVYKSG…WCIKILSPQE (85 aa)). Residues 896–909 (PSSNNVDKLPSNGN) show a composition bias toward polar residues. Residues 896–917 (PSSNNVDKLPSNGNCDDFGNRS) form a disordered region.

Belongs to the ARF family. As to quaternary structure, homodimers and heterodimers. As to expression, expressed in the whole plant.

The protein resides in the nucleus. In terms of biological role, auxin response factors (ARFs) are transcriptional factors that bind specifically to the DNA sequence 5'-TGTCTC-3' found in the auxin-responsive promoter elements (AuxREs). Seems to act as transcriptional activator. Formation of heterodimers with Aux/IAA proteins may alter their ability to modulate early auxin response genes expression. Regulates both stamen and gynoecium maturation. Promotes jasmonic acid production. Partially redundant with ARF8. This chain is Auxin response factor 6 (ARF6), found in Arabidopsis thaliana (Mouse-ear cress).